Consider the following 215-residue polypeptide: Nascent polypeptide-associated complex subunit alpha (215 aa).

Positions 1–81 (MPGEATETVP…SEKKARKAMS (81 aa)) are disordered. Residues 9 to 28 (VPATEQELPQPQAETGSGTE) are compositionally biased toward polar residues. The segment covering 29-40 (SDSDESVPELEG) has biased composition (acidic residues). S43 is subject to Phosphoserine; by ILK1. Residues 44-57 (TQATTQQAQLAAAA) are compositionally biased toward low complexity. The segment at 69-80 (QSRSEKKARKAM) is required for DNA-binding. In terms of domain architecture, NAC-A/B spans 70 to 135 (SRSEKKARKA…AKIEDLSQQA (66 aa)). Residues 93 to 108 (RVTIRKSKNILFVITK) are RNA/DNA-binding. S132 is modified (phosphoserine). K142 carries the post-translational modification N6-acetyllysine; alternate. K142 is covalently cross-linked (Glycyl lysine isopeptide (Lys-Gly) (interchain with G-Cter in SUMO2); alternate). At T159 the chain carries Phosphothreonine; by GSK3-beta. At T161 the chain carries Phosphothreonine. S166, S186, S191, and S203 each carry phosphoserine. In terms of domain architecture, UBA spans 176–213 (VEVKDIEWVMSQANVSRAKAVRALKNNSNNIVNAIMEL).

The protein belongs to the NAC-alpha family. Part of the nascent polypeptide-associated complex (NAC), which is a heterodimer of NACA and BTF3 (via NAC-A/B domains). NAC associates with ribosomes through the BTF3/NACB subunit and contacts the ribosomal protein L23, which is positioned near the exiting site. Both subunits can contact nascent polypeptide chains. NACA may also form homodimers, and only this form binds DNA. Interacts with TBP and JUN. In terms of processing, phosphorylation of Ser-43 by ILK during cell adhesion may promote nuclear localization. Phosphorylation of Thr-159 by GSK3B may promote proteasome mediated degradation.

It is found in the cytoplasm. The protein localises to the nucleus. Its function is as follows. Prevents inappropriate targeting of non-secretory polypeptides to the endoplasmic reticulum (ER). Binds to nascent polypeptide chains as they emerge from the ribosome and blocks their interaction with the signal recognition particle (SRP), which normally targets nascent secretory peptides to the ER. Also reduces the inherent affinity of ribosomes for protein translocation sites in the ER membrane (M sites). May act as a specific coactivator for JUN, binding to DNA and stabilizing the interaction of JUN homodimers with target gene promoters. The sequence is that of Nascent polypeptide-associated complex subunit alpha from Chinchilla lanigera (Long-tailed chinchilla).